A 204-amino-acid polypeptide reads, in one-letter code: Large ribosomal subunit protein eL15 (204 aa).

This sequence belongs to the eukaryotic ribosomal protein eL15 family. As to quaternary structure, component of the large ribosomal subunit.

The protein resides in the cytoplasm. In terms of biological role, component of the large ribosomal subunit. The ribosome is a large ribonucleoprotein complex responsible for the synthesis of proteins in the cell. This Cyprinus carpio (Common carp) protein is Large ribosomal subunit protein eL15 (rpl15).